The sequence spans 339 residues: Glyceraldehyde-3-phosphate dehydrogenase (339 aa).

NAD(+) contacts are provided by residues 12–13, D34, R78, and T120; that span reads RI. D-glyceraldehyde 3-phosphate-binding positions include 149–151, T180, 209–210, and R232; these read SCT and TG. Catalysis depends on C150, which acts as the Nucleophile. N319 is a binding site for NAD(+).

This sequence belongs to the glyceraldehyde-3-phosphate dehydrogenase family. In terms of assembly, homotetramer.

Its subcellular location is the cytoplasm. The enzyme catalyses D-glyceraldehyde 3-phosphate + phosphate + NAD(+) = (2R)-3-phospho-glyceroyl phosphate + NADH + H(+). It participates in carbohydrate degradation; glycolysis; pyruvate from D-glyceraldehyde 3-phosphate: step 1/5. Catalyzes the oxidative phosphorylation of glyceraldehyde 3-phosphate (G3P) to 1,3-bisphosphoglycerate (BPG) using the cofactor NAD. The first reaction step involves the formation of a hemiacetal intermediate between G3P and a cysteine residue, and this hemiacetal intermediate is then oxidized to a thioester, with concomitant reduction of NAD to NADH. The reduced NADH is then exchanged with the second NAD, and the thioester is attacked by a nucleophilic inorganic phosphate to produce BPG. This is Glyceraldehyde-3-phosphate dehydrogenase (gapA) from Haemophilus influenzae (strain ATCC 51907 / DSM 11121 / KW20 / Rd).